The following is a 518-amino-acid chain: Glycerophosphoinositol transporter 1 (518 aa).

Residues 1 to 44 (MEDKDITSVNEKEVNENTNPRIIKYDAERRATRTETSKKDKWKN) are Cytoplasmic-facing. Residues 45–65 (IVTIIASGFALISDGYVNGSM) traverse the membrane as a helical segment. Over 66 to 91 (SMLNKVFVMEYGKKNYSSKVSTRVSN) the chain is Extracellular. Asparagine 80 is a glycosylation site (N-linked (GlcNAc...) asparagine). The chain crosses the membrane as a helical span at residues 92-112 (AALVGIIFGQFFMGIAADYYS). Over 113-114 (RK) the chain is Cytoplasmic. Residues 115-136 (SCILVATAILVIGSALCAASHG) traverse the membrane as a helical segment. Residues 137-138 (TT) are Extracellular-facing. The helical transmembrane segment at 139–159 (VPGMFWMLTVMRGLVGIGVGA) threads the bilayer. At 160-184 (EYPTSTLSANESANEYTTTKRGGIL) the chain is on the cytoplasmic side. The chain crosses the membrane as a helical span at residues 185–205 (VMVTNLPLAFGGPFATIIFLI). At 206 to 216 (VYKICSGTKHL) the chain is on the extracellular side. The chain crosses the membrane as a helical span at residues 217-237 (EAIWRTVFAIGCFWPLSVFYF). Over 238–268 (RWKTATTEVYEKGRIKRNIPYFLALKFYWKR) the chain is Cytoplasmic. A helical membrane pass occupies residues 269–289 (LLGTCGTWFMYDFVTFPNGIF). At 290–306 (SSTIISSVIKDQNDLVK) the chain is on the extracellular side. A helical transmembrane segment spans residues 307–327 (VAEWNLLLGVLAVLGVPIGAY). The Cytoplasmic portion of the chain corresponds to 328–335 (LSDRIGRK). A helical transmembrane segment spans residues 336-356 (YTLMFGFSGYIIFGLIIGCAY). Topologically, residues 357–360 (DQLK) are extracellular. A helical membrane pass occupies residues 361-381 (KITPLFIIFYAFMNMLGNAGP). The Cytoplasmic portion of the chain corresponds to 382 to 399 (GDMLGVISSEASATAVRG). The chain crosses the membrane as a helical span at residues 400–420 (VFYGLSAVTGKIGSVVGVECF). Topologically, residues 421–430 (QPIRDNLGAR) are extracellular. Residues 431–451 (WTFIIAAICGLIGIIITYFFV) traverse the membrane as a helical segment. Over 452-518 (PHSLESDLMK…IISVRQVDQS (67 aa)) the chain is Cytoplasmic.

This sequence belongs to the major facilitator superfamily. Sugar transporter (TC 2.A.1.1) family.

The protein resides in the cell membrane. The catalysed reaction is sn-glycerol 3-phosphocholine(out) = sn-glycerol 3-phosphocholine(in). It catalyses the reaction sn-glycero-3-phospho-1D-myo-inositol(out) = sn-glycero-3-phospho-1D-myo-inositol(in). Functionally, glycerophosphodiester transporter that mediates uptake of both glycerophosphoinositol (GroPIns) and glycerophosphocholine (GroPCho) as sources of the nutrients inositol and phosphate. This Saccharomyces cerevisiae (strain ATCC 204508 / S288c) (Baker's yeast) protein is Glycerophosphoinositol transporter 1.